Reading from the N-terminus, the 136-residue chain is Histone H3.1 (136 aa).

The interval 1-43 is disordered; it reads MARTKQTARKSTGGKAPRKQLATKAARKSAPATGGVKKPHRYR. Asymmetric dimethylarginine; by PRMT6; alternate is present on Arg3. Arg3 bears the Citrulline; alternate mark. Thr4 carries the phosphothreonine; by HASPIN and VRK1 modification. An Allysine; alternate modification is found at Lys5. Residue Lys5 is modified to N6,N6,N6-trimethyllysine; alternate. Lys5 carries the N6,N6-dimethyllysine; alternate modification. Residue Lys5 is modified to N6-(2-hydroxyisobutyryl)lysine; alternate. Residue Lys5 is modified to N6-(beta-hydroxybutyryl)lysine; alternate. Lys5 is modified (N6-acetyllysine; alternate). Lys5 is modified (N6-crotonyllysine; alternate). At Lys5 the chain carries N6-methyllysine; alternate. Gln6 bears the 5-glutamyl dopamine; alternate mark. 5-glutamyl serotonin; alternate is present on Gln6. Thr7 carries the post-translational modification Phosphothreonine; by PKC. Citrulline; alternate is present on Arg9. Residue Arg9 is modified to Symmetric dimethylarginine; by PRMT5; alternate. The residue at position 10 (Lys10) is an N6,N6,N6-trimethyllysine; alternate. The residue at position 10 (Lys10) is an N6,N6-dimethyllysine; alternate. Position 10 is an N6-(2-hydroxyisobutyryl)lysine; alternate (Lys10). Position 10 is an N6-(beta-hydroxybutyryl)lysine; alternate (Lys10). At Lys10 the chain carries N6-acetyllysine; alternate. Lys10 is modified (N6-crotonyllysine; alternate). At Lys10 the chain carries N6-methyllysine; alternate. Lys10 carries the N6-butyryllysine; alternate modification. At Lys10 the chain carries N6-lactoyllysine; alternate. Ser11 is modified (ADP-ribosylserine; alternate). Residue Ser11 is modified to Phosphoserine; alternate; by AURKB, AURKC, RPS6KA3, RPS6KA4 and RPS6KA5. Position 12 is a phosphothreonine; by PKC and CHEK1 (Thr12). Lys15 bears the N6-(2-hydroxyisobutyryl)lysine; alternate mark. Lys15 carries the N6-(beta-hydroxybutyryl)lysine; alternate modification. Lys15 carries the post-translational modification N6-acetyllysine; alternate. An N6-lactoyllysine; alternate modification is found at Lys15. An N6-glutaryllysine; alternate modification is found at Lys15. At Lys15 the chain carries N6-succinyllysine; alternate. Position 18 is a citrulline; alternate (Arg18). Asymmetric dimethylarginine; by CARM1; alternate is present on Arg18. N6-(2-hydroxyisobutyryl)lysine; alternate occurs at positions 19 and 24. 2 positions are modified to N6-(beta-hydroxybutyryl)lysine; alternate: Lys19 and Lys24. 2 positions are modified to N6-acetyllysine; alternate: Lys19 and Lys24. 2 positions are modified to N6-crotonyllysine; alternate: Lys19 and Lys24. 2 positions are modified to N6-methyllysine; alternate: Lys19 and Lys24. Lys19 and Lys24 each carry N6-butyryllysine; alternate. 2 positions are modified to N6-lactoyllysine; alternate: Lys19 and Lys24. Residues Lys19 and Lys24 each carry the N6-glutaryllysine; alternate modification. Lys19 carries the N6-decanoyllysine lipid modification. The residue at position 27 (Arg27) is a Citrulline. At Lys28 the chain carries N6,N6,N6-trimethyllysine; alternate. An N6,N6-dimethyllysine; alternate modification is found at Lys28. Lys28 bears the N6-(2-hydroxyisobutyryl)lysine; alternate mark. The residue at position 28 (Lys28) is an N6-(beta-hydroxybutyryl)lysine; alternate. Lys28 carries the N6-acetyllysine; alternate modification. Lys28 is modified (N6-crotonyllysine; alternate). An N6-methyllysine; alternate modification is found at Lys28. Lys28 bears the N6-lactoyllysine; alternate mark. Position 28 is an N6-glutaryllysine; alternate (Lys28). Ser29 carries the post-translational modification ADP-ribosylserine; alternate. A Phosphoserine; alternate; by AURKB, AURKC and RPS6KA5 modification is found at Ser29. Lys37 bears the N6,N6,N6-trimethyllysine; alternate mark. Position 37 is an N6,N6-dimethyllysine; alternate (Lys37). Lys37 carries the post-translational modification N6-(2-hydroxyisobutyryl)lysine; alternate. Residue Lys37 is modified to N6-acetyllysine; alternate. Position 37 is an N6-methyllysine; alternate (Lys37). Lys38 bears the N6-methyllysine mark. Position 42 is a phosphotyrosine (Tyr42). N6,N6,N6-trimethyllysine; alternate is present on Lys57. At Lys57 the chain carries N6-(2-hydroxyisobutyryl)lysine; alternate. Position 57 is an N6-(beta-hydroxybutyryl)lysine; alternate (Lys57). At Lys57 the chain carries N6-acetyllysine; alternate. An N6-crotonyllysine; alternate modification is found at Lys57. The residue at position 57 (Lys57) is an N6-lactoyllysine; alternate. At Lys57 the chain carries N6-glutaryllysine; alternate. Lys57 is modified (N6-succinyllysine; alternate). Lys57 carries the post-translational modification N6-methyllysine; by EHMT2; alternate. Ser58 is modified (phosphoserine). N6-(2-hydroxyisobutyryl)lysine; alternate occurs at positions 65 and 80. 2 positions are modified to N6-methyllysine; alternate: Lys65 and Lys80. Lys80 bears the N6,N6,N6-trimethyllysine; alternate mark. Residue Lys80 is modified to N6,N6-dimethyllysine; alternate. N6-(beta-hydroxybutyryl)lysine; alternate is present on Lys80. Lys80 carries the post-translational modification N6-acetyllysine; alternate. Lys80 carries the N6-lactoyllysine; alternate modification. An N6-glutaryllysine; alternate modification is found at Lys80. At Lys80 the chain carries N6-succinyllysine; alternate. A Phosphothreonine modification is found at Thr81. Residue Ser87 is modified to Phosphoserine. Thr108 bears the Phosphothreonine mark. N6-acetyllysine; alternate is present on residues Lys116 and Lys123. N6-glutaryllysine; alternate is present on residues Lys116 and Lys123. At Lys123 the chain carries N6-(2-hydroxyisobutyryl)lysine; alternate. An N6-(beta-hydroxybutyryl)lysine; alternate modification is found at Lys123. Residue Lys123 is modified to N6-methyllysine; alternate. Lys123 carries the post-translational modification N6-succinyllysine; alternate.

The protein belongs to the histone H3 family. As to quaternary structure, the nucleosome is a histone octamer containing two molecules each of H2A, H2B, H3 and H4 assembled in one H3-H4 heterotetramer and two H2A-H2B heterodimers. The octamer wraps approximately 147 bp of DNA. Interacts with TONSL; CHAF1A; CHAF1B; MCM2 and DNAJC9. Interacts with NASP; NASP is a histone chaperone that stabilizes and maintains a soluble pool of Histone H3-H4 dimers. In terms of processing, acetylation is generally linked to gene activation. Acetylation on Lys-10 (H3K9ac) impairs methylation at Arg-9 (H3R8me2s). Acetylation on Lys-19 (H3K18ac) and Lys-24 (H3K24ac) favors methylation at Arg-18 (H3R17me). Acetylation at Lys-123 (H3K122ac) by EP300/p300 plays a central role in chromatin structure: localizes at the surface of the histone octamer and stimulates transcription, possibly by promoting nucleosome instability. Post-translationally, citrullination at Arg-9 (H3R8ci) and/or Arg-18 (H3R17ci) by PADI4 impairs methylation and represses transcription. Asymmetric dimethylation at Arg-18 (H3R17me2a) by CARM1 is linked to gene activation. Symmetric dimethylation at Arg-9 (H3R8me2s) by PRMT5 is linked to gene repression. Asymmetric dimethylation at Arg-3 (H3R2me2a) by PRMT6 is linked to gene repression and is mutually exclusive with H3 Lys-5 methylation (H3K4me2 and H3K4me3). H3R2me2a is present at the 3' of genes regardless of their transcription state and is enriched on inactive promoters, while it is absent on active promoters. In terms of processing, methylation at Lys-5 (H3K4me), Lys-37 (H3K36me) and Lys-80 (H3K79me) are linked to gene activation. Methylation at Lys-5 (H3K4me) facilitates subsequent acetylation of H3 and H4. Methylation at Lys-80 (H3K79me) is associated with DNA double-strand break (DSB) responses and is a specific target for TP53BP1. Methylation at Lys-10 (H3K9me) and Lys-28 (H3K27me) are linked to gene repression. Methylation at Lys-10 (H3K9me) is a specific target for HP1 proteins (CBX1, CBX3 and CBX5) and prevents subsequent phosphorylation at Ser-11 (H3S10ph) and acetylation of H3 and H4. Methylation at Lys-5 (H3K4me) and Lys-80 (H3K79me) require preliminary monoubiquitination of H2B at 'Lys-120'. Methylation at Lys-10 (H3K9me) and Lys-28 (H3K27me) are enriched in inactive X chromosome chromatin. Monomethylation at Lys-57 (H3K56me1) by EHMT2/G9A in G1 phase promotes interaction with PCNA and is required for DNA replication. Post-translationally, phosphorylated at Thr-4 (H3T3ph) by VRK1. Phosphorylated at Thr-4 (H3T3ph) by HASPIN during prophase and dephosphorylated during anaphase. Phosphorylation at Ser-11 (H3S10ph) by AURKB is crucial for chromosome condensation and cell-cycle progression during mitosis and meiosis. In addition phosphorylation at Ser-11 (H3S10ph) by RPS6KA4 and RPS6KA5 is important during interphase because it enables the transcription of genes following external stimulation, like mitogens, stress, growth factors or UV irradiation and result in the activation of genes, such as c-fos and c-jun. Phosphorylation at Ser-11 (H3S10ph), which is linked to gene activation, prevents methylation at Lys-10 (H3K9me) but facilitates acetylation of H3 and H4. Phosphorylation at Ser-11 (H3S10ph) by AURKB mediates the dissociation of HP1 proteins (CBX1, CBX3 and CBX5) from heterochromatin. Phosphorylation at Ser-11 (H3S10ph) is also an essential regulatory mechanism for neoplastic cell transformation. Phosphorylated at Ser-29 (H3S28ph) by MAP3K20 isoform 1, RPS6KA5 or AURKB during mitosis or upon ultraviolet B irradiation. Phosphorylation at Thr-7 (H3T6ph) by PRKCB is a specific tag for epigenetic transcriptional activation that prevents demethylation of Lys-5 (H3K4me) by LSD1/KDM1A. At centromeres, specifically phosphorylated at Thr-12 (H3T11ph) from prophase to early anaphase, by DAPK3 and PKN1. Phosphorylation at Thr-12 (H3T11ph) by PKN1 or isoform M2 of PKM (PKM2) is a specific tag for epigenetic transcriptional activation that promotes demethylation of Lys-10 (H3K9me) by KDM4C/JMJD2C. Phosphorylation at Thr-12 (H3T11ph) by chromatin-associated CHEK1 regulates the transcription of cell cycle regulatory genes by modulating acetylation of Lys-10 (H3K9ac). Phosphorylation at Tyr-42 (H3Y41ph) by JAK2 promotes exclusion of CBX5 (HP1 alpha) from chromatin. Monoubiquitinated by RAG1 in lymphoid cells, monoubiquitination is required for V(D)J recombination. Ubiquitinated by the CUL4-DDB-RBX1 complex in response to ultraviolet irradiation. This may weaken the interaction between histones and DNA and facilitate DNA accessibility to repair proteins. In terms of processing, lysine deamination at Lys-5 (H3K4all) to form allysine is mediated by LOXL2. Allysine formation by LOXL2 only takes place on H3K4me3 and results in gene repression. Post-translationally, crotonylation (Kcr) is specifically present in male germ cells and marks testis-specific genes in post-meiotic cells, including X-linked genes that escape sex chromosome inactivation in haploid cells. Crotonylation marks active promoters and enhancers and confers resistance to transcriptional repressors. It is also associated with post-meiotically activated genes on autosomes. Butyrylation of histones marks active promoters and competes with histone acetylation. It is present during late spermatogenesis. In terms of processing, succinylation at Lys-80 (H3K79succ) by KAT2A takes place with a maximum frequency around the transcription start sites of genes. It gives a specific tag for epigenetic transcription activation. Desuccinylation at Lys-123 (H3K122succ) by SIRT7 in response to DNA damage promotes chromatin condensation and double-strand breaks (DSBs) repair. Post-translationally, serine ADP-ribosylation by PARP1 or PARP2 constitutes the primary form of ADP-ribosylation of proteins in response to DNA damage. Serine ADP-ribosylation at Ser-11 (H3S10ADPr) promotes recruitment of CHD1L. H3S10ADPr is mutually exclusive with phosphorylation at Ser-11 (H3S10ph) and impairs acetylation at Lys-10 (H3K9ac). Serotonylated by TGM2 at Gln-6 (H3Q5ser) during serotonergic neuron differentiation. H3Q5ser is associated with trimethylation of Lys-5 (H3K4me3) and enhances general transcription factor IID (TFIID) complex-binding to H3K4me3, thereby facilitating transcription. In terms of processing, dopaminylated by TGM2 at Gln-6 (H3Q5dop) in ventral tegmental area (VTA) neurons. H3Q5dop mediates neurotransmission-independent role of nuclear dopamine by regulating relapse-related transcriptional plasticity in the reward system. Post-translationally, lactylated in macrophages by EP300/P300 by using lactoyl-CoA directly derived from endogenous or exogenous lactate, leading to stimulates gene transcription.

It localises to the nucleus. It is found in the chromosome. Core component of nucleosome. Nucleosomes wrap and compact DNA into chromatin, limiting DNA accessibility to the cellular machineries which require DNA as a template. Histones thereby play a central role in transcription regulation, DNA repair, DNA replication and chromosomal stability. DNA accessibility is regulated via a complex set of post-translational modifications of histones, also called histone code, and nucleosome remodeling. The chain is Histone H3.1 from Homo sapiens (Human).